A 692-amino-acid chain; its full sequence is Elongation factor G (692 aa).

A tr-type G domain is found at 8-282 (ENTRNIGIMA…AVIDYLPSPL (275 aa)). GTP is bound by residues 17–24 (AHIDAGKT), 81–85 (DTPGH), and 135–138 (NKMD).

Belongs to the TRAFAC class translation factor GTPase superfamily. Classic translation factor GTPase family. EF-G/EF-2 subfamily.

It is found in the cytoplasm. Catalyzes the GTP-dependent ribosomal translocation step during translation elongation. During this step, the ribosome changes from the pre-translocational (PRE) to the post-translocational (POST) state as the newly formed A-site-bound peptidyl-tRNA and P-site-bound deacylated tRNA move to the P and E sites, respectively. Catalyzes the coordinated movement of the two tRNA molecules, the mRNA and conformational changes in the ribosome. The protein is Elongation factor G of Bacillus mycoides (strain KBAB4) (Bacillus weihenstephanensis).